The sequence spans 601 residues: Ubiquitin carboxyl-terminal hydrolase MINDY-2 (601 aa).

Residues 1–205 form a disordered region; sequence MENSPDSPQP…LCKEEEEDPA (205 aa). The span at 24-34 shows a compositional bias: basic and acidic residues; the sequence is EGRRRGGREAE. Thr-62 carries the phosphothreonine modification. Position 82 is a phosphoserine (Ser-82). Low complexity-rich tracts occupy residues 127-141, 148-169, and 186-195; these read EEPS…SCSE, SPSL…SSEF, and GAAGPPRAAP. Cys-244 acts as the Nucleophile in catalysis. The Proton acceptor role is filled by His-426. The ubiquitin-binding domain (UBD) stretch occupies residues 485–537; sequence GQQDQIDQDYLMALSLQQEQQSQEINWEQIPEGISDLELAKKLQEEEDRRASQ. The tract at residues 534–601 is disordered; that stretch reads RASQYYQEQE…EKEKNSCVIL (68 aa). Residues 536 to 570 show a composition bias toward low complexity; the sequence is SQYYQEQEQAQAVVTTTTPSTQAQQGQPAQASPSS. Residues 577–601 show a composition bias toward basic and acidic residues; that stretch reads SERKRKEPREKDKEKEKEKNSCVIL.

Belongs to the MINDY deubiquitinase family. FAM63 subfamily.

The catalysed reaction is Thiol-dependent hydrolysis of ester, thioester, amide, peptide and isopeptide bonds formed by the C-terminal Gly of ubiquitin (a 76-residue protein attached to proteins as an intracellular targeting signal).. In terms of biological role, hydrolase that can remove 'Lys-48'-linked conjugated ubiquitin from proteins. Can also bind to polyubiquitin chains of different linkage types, including 'Lys-6', 'Lys-11', 'Lys-29', 'Lys-33' and 'Lys-63'. May play a regulatory role at the level of protein turnover. This is Ubiquitin carboxyl-terminal hydrolase MINDY-2 (Mindy2) from Mus musculus (Mouse).